The chain runs to 175 residues: Cell number regulator 9 (175 aa).

2 helical membrane-spanning segments follow: residues 53–73 (GLCC…AEIV) and 80–100 (CGVA…HWIY).

The protein belongs to the cornifelin family. In terms of tissue distribution, expressed in roots, coleoptiles, leaves and stalks.

Its subcellular location is the membrane. This chain is Cell number regulator 9 (CNR9), found in Zea mays (Maize).